A 345-amino-acid chain; its full sequence is Putative RING-H2 finger protein ATL36 (345 aa).

The first 31 residues, Met1–Cys31, serve as a signal peptide directing secretion. A helical transmembrane segment spans residues Ser50–Leu70. An RING-type; atypical zinc finger spans residues Cys123 to Arg165. Ser264 is modified (phosphoserine).

It belongs to the RING-type zinc finger family. ATL subfamily.

The protein localises to the membrane. It carries out the reaction S-ubiquitinyl-[E2 ubiquitin-conjugating enzyme]-L-cysteine + [acceptor protein]-L-lysine = [E2 ubiquitin-conjugating enzyme]-L-cysteine + N(6)-ubiquitinyl-[acceptor protein]-L-lysine.. It functions in the pathway protein modification; protein ubiquitination. This chain is Putative RING-H2 finger protein ATL36 (ATL36), found in Arabidopsis thaliana (Mouse-ear cress).